We begin with the raw amino-acid sequence, 73 residues long: Putative membrane protein insertion efficiency factor (73 aa).

It belongs to the UPF0161 family.

It localises to the cell inner membrane. In terms of biological role, could be involved in insertion of integral membrane proteins into the membrane. This Treponema denticola (strain ATCC 35405 / DSM 14222 / CIP 103919 / JCM 8153 / KCTC 15104) protein is Putative membrane protein insertion efficiency factor.